We begin with the raw amino-acid sequence, 293 residues long: Bifunctional monothiol glutaredoxin-S16, chloroplastic (293 aa).

A chloroplast-targeting transit peptide spans 1-62 (MAAITISSSL…APSRRRSFFI (62 aa)). Cys123 and Cys219 are oxidised to a cystine. In terms of domain architecture, Glutaredoxin spans 194-293 (EELIDRLVKE…ENGELANILN (100 aa)). Lys211 contributes to the glutathione binding site. [2Fe-2S] cluster is bound at residue Cys219. Residues Arg251, Phe263, and 276–277 (CD) contribute to the glutathione site.

The protein belongs to the glutaredoxin family. CGFS subfamily. In terms of assembly, [2Fe-2S]-bridged holo-homodimer. Interacts in vitro with SUFE1, BOLA1, BOLA2 and BOLA4. Interacts in vivo only with SUFE1, BOLA1 and BOLA4. Interacts with SBP1.

Its subcellular location is the plastid. The protein localises to the chloroplast. Its activity is regulated as follows. The formation of an intramolecular disulfide bond negatively regulates both the N-terminal endonuclease and the C-terminal glutaredoxin activities. Functionally, may only reduce GSH-thiol disulfides, but not protein disulfides. Participates probably to the maturation of iron-sulfur proteins and to the regulation of the redox state of the BOLA proteins. The GRXS16-BOLA1 heterodimer binds a labile, oxygen sensitive iron-sulfur cluster. Able to cleave linearized DNA in vitro. The chain is Bifunctional monothiol glutaredoxin-S16, chloroplastic from Arabidopsis thaliana (Mouse-ear cress).